The chain runs to 234 residues: MHIPESLQDLADSEAVQFLKRPKAITRIFAGVFSLIVFSSLLTDGYQNKTDNSELHCVLNSNSTACSIAVGAGLLAFLSSLAFLALDAHEVRLASTRFKTAFQLLDLILAVIWAGVWAVGFCFLANQWHRSPPRYFLLGSNSAKAAITFSFFSILVWIFQAYLAFQELRNDAPVPYKRSLDEGGVVLTSLSPPSAASPVNTPTTGPHGPSYASSSLSPYLSTPKAPRLAMMPDN.

The 152-residue stretch at 18 to 169 folds into the MARVEL domain; sequence FLKRPKAITR…QAYLAFQELR (152 aa). The next 4 membrane-spanning stretches (helical) occupy residues 25–45, 66–86, 104–124, and 145–165; these read ITRI…LTDG, CSIA…FLAL, LLDL…FCFL, and AAIT…YLAF. Residues 191–226 are disordered; the sequence is SPPSAASPVNTPTTGPHGPSYASSSLSPYLSTPKAP. The span at 209–221 shows a compositional bias: low complexity; that stretch reads PSYASSSLSPYLS.

It belongs to the synaptogyrin family.

Its subcellular location is the membrane. The chain is Synaptogyrin-4 (SYNGR4) from Bos taurus (Bovine).